Reading from the N-terminus, the 335-residue chain is Glyceraldehyde-3-phosphate dehydrogenase, cytosolic (335 aa).

Residues R13–I14, D35, and R80 contribute to the NAD(+) site. D-glyceraldehyde 3-phosphate contacts are provided by residues S151–T153, T182, T211–G212, and R234. The active-site Nucleophile is the C152. N316 contacts NAD(+).

It belongs to the glyceraldehyde-3-phosphate dehydrogenase family. Homotetramer.

The protein resides in the cytoplasm. The catalysed reaction is D-glyceraldehyde 3-phosphate + phosphate + NAD(+) = (2R)-3-phospho-glyceroyl phosphate + NADH + H(+). Its pathway is carbohydrate degradation; glycolysis; pyruvate from D-glyceraldehyde 3-phosphate: step 1/5. The sequence is that of Glyceraldehyde-3-phosphate dehydrogenase, cytosolic (GAPC) from Chondrus crispus (Carrageen Irish moss).